The chain runs to 123 residues: Cytochrome c-555 (123 aa).

The first 27 residues, 1-27, serve as a signal peptide directing secretion; the sequence is MDHKKTSIRTTALAALVLGAVAAPAFS. Positions 46, 49, 50, and 86 each coordinate heme c.

Post-translationally, binds 1 heme c group covalently per subunit.

In Methylococcus capsulatus (strain ATCC 33009 / NCIMB 11132 / Bath), this protein is Cytochrome c-555.